Reading from the N-terminus, the 492-residue chain is Dipeptide permease D (492 aa).

The next 13 membrane-spanning stretches (helical) occupy residues 14–34 (VVAL…LLIL), 49–69 (ALFS…GYLA), 91–111 (LVLG…AIIV), 138–158 (GGFS…PIAC), 167–187 (WAMG…IFLC), 212–232 (NWGW…VLFW), 236–256 (SVYA…RIYL), 269–289 (LIVV…QGGS), 312–332 (MFQS…AWLV), 344–364 (IWGK…ILTL), 379–399 (LMVL…PVAM), 413–433 (VLTG…AGVI), and 458–478 (VFSQ…VIWL).

This sequence belongs to the major facilitator superfamily. Proton-dependent oligopeptide transporter (POT/PTR) (TC 2.A.17) family. DtpD subfamily.

Its subcellular location is the cell inner membrane. Probable proton-dependent permease that transports dipeptides. The polypeptide is Dipeptide permease D (Klebsiella pneumoniae subsp. pneumoniae (strain ATCC 700721 / MGH 78578)).